The following is a 452-amino-acid chain: Sulfide:quinone oxidoreductase, mitochondrial (452 aa).

Residues 54-55 (AG), E77, Q85, and V120 contribute to the FAD site. The active-site Cysteine persulfide intermediate is the C204. C204 and C380 form a disulfide bridge. Residues D337 and 345–348 (KTAA) each bind FAD. Residue C380 is the Cysteine persulfide intermediate of the active site.

This sequence belongs to the SQRD family. The cofactor is FAD.

It localises to the mitochondrion. It carries out the reaction ubiquinone-10 + hydrogen sulfide + sulfite + 2 H(+) = ubiquinol-10 + thiosulfate. The enzyme catalyses a quinone + hydrogen sulfide + glutathione + H(+) = S-sulfanylglutathione + a quinol. Catalyzes the oxidation of hydrogen sulfide, with the help of a quinone. This Dictyostelium discoideum (Social amoeba) protein is Sulfide:quinone oxidoreductase, mitochondrial.